The following is a 426-amino-acid chain: Glutamate-1-semialdehyde 2,1-aminomutase (426 aa).

At Lys-263 the chain carries N6-(pyridoxal phosphate)lysine.

The protein belongs to the class-III pyridoxal-phosphate-dependent aminotransferase family. HemL subfamily. In terms of assembly, homodimer. It depends on pyridoxal 5'-phosphate as a cofactor.

The protein localises to the cytoplasm. The enzyme catalyses (S)-4-amino-5-oxopentanoate = 5-aminolevulinate. The protein operates within porphyrin-containing compound metabolism; protoporphyrin-IX biosynthesis; 5-aminolevulinate from L-glutamyl-tRNA(Glu): step 2/2. The protein is Glutamate-1-semialdehyde 2,1-aminomutase of Dichelobacter nodosus (strain VCS1703A).